We begin with the raw amino-acid sequence, 307 residues long: Acetyl-coenzyme A carboxylase carboxyl transferase subunit beta (307 aa).

Residues 25–294 (LWIKDPESGE…TEENGSRRLP (270 aa)) form the CoA carboxyltransferase N-terminal domain.

The protein belongs to the AccD/PCCB family. Acetyl-CoA carboxylase is a heterohexamer composed of biotin carboxyl carrier protein (AccB), biotin carboxylase (AccC) and two subunits each of ACCase subunit alpha (AccA) and ACCase subunit beta (AccD).

The protein localises to the cytoplasm. The catalysed reaction is N(6)-carboxybiotinyl-L-lysyl-[protein] + acetyl-CoA = N(6)-biotinyl-L-lysyl-[protein] + malonyl-CoA. It participates in lipid metabolism; malonyl-CoA biosynthesis; malonyl-CoA from acetyl-CoA: step 1/1. Its function is as follows. Component of the acetyl coenzyme A carboxylase (ACC) complex. Biotin carboxylase (BC) catalyzes the carboxylation of biotin on its carrier protein (BCCP) and then the CO(2) group is transferred by the transcarboxylase to acetyl-CoA to form malonyl-CoA. The protein is Acetyl-coenzyme A carboxylase carboxyl transferase subunit beta of Chelativorans sp. (strain BNC1).